Consider the following 90-residue polypeptide: Small ribosomal subunit protein bS16 (90 aa).

This sequence belongs to the bacterial ribosomal protein bS16 family.

In Anoxybacillus flavithermus (strain DSM 21510 / WK1), this protein is Small ribosomal subunit protein bS16.